Reading from the N-terminus, the 394-residue chain is Elongation factor Tu (394 aa).

The tr-type G domain maps to 10 to 205 (KPHVNIGTIG…VDNWIPLPPR (196 aa)). The G1 stretch occupies residues 19–26 (GHVDHGKT). 19–26 (GHVDHGKT) provides a ligand contact to GTP. T26 contacts Mg(2+). The tract at residues 60–64 (GITIN) is G2. The G3 stretch occupies residues 81-84 (DCPG). Residues 81-85 (DCPGH) and 136-139 (NKCD) contribute to the GTP site. Residues 136–139 (NKCD) form a G4 region. A G5 region spans residues 174–176 (SAL).

The protein belongs to the TRAFAC class translation factor GTPase superfamily. Classic translation factor GTPase family. EF-Tu/EF-1A subfamily. Monomer.

Its subcellular location is the cytoplasm. The catalysed reaction is GTP + H2O = GDP + phosphate + H(+). In terms of biological role, GTP hydrolase that promotes the GTP-dependent binding of aminoacyl-tRNA to the A-site of ribosomes during protein biosynthesis. This Bacteroides thetaiotaomicron (strain ATCC 29148 / DSM 2079 / JCM 5827 / CCUG 10774 / NCTC 10582 / VPI-5482 / E50) protein is Elongation factor Tu.